The primary structure comprises 480 residues: Cysteine--tRNA ligase (480 aa).

Cysteine 27 contacts Zn(2+). Residues 29 to 39 (PTVYNYAHIGN) carry the 'HIGH' region motif. Residues cysteine 221, histidine 246, and glutamate 250 each coordinate Zn(2+). Residues 278–282 (KMSKS) carry the 'KMSKS' region motif. Lysine 281 contacts ATP.

This sequence belongs to the class-I aminoacyl-tRNA synthetase family. Monomer. Requires Zn(2+) as cofactor.

It is found in the cytoplasm. The catalysed reaction is tRNA(Cys) + L-cysteine + ATP = L-cysteinyl-tRNA(Cys) + AMP + diphosphate. This Borrelia garinii subsp. bavariensis (strain ATCC BAA-2496 / DSM 23469 / PBi) (Borreliella bavariensis) protein is Cysteine--tRNA ligase.